Here is a 1360-residue protein sequence, read N- to C-terminus: Ubiquitin carboxyl-terminal hydrolase 19 (1360 aa).

Residues 1 to 46 form a disordered region; sequence MSAGASATGPRRGPPGLEEATSKKKQKDRANLESKDGDARRVSLPR. Residues 1 to 1333 are Cytoplasmic-facing; it reads MSAGASATGP…TTPDEGCLRY (1333 aa). Positions 28 to 46 are enriched in basic and acidic residues; that stretch reads DRANLESKDGDARRVSLPR. Positions 51 to 140 constitute a CS 1 domain; it reads KDELLLDWRQ…VPLLTWPSLL (90 aa). Residues 163 to 239 are disordered; the sequence is PIALEPGSEP…APSFLSDSAT (77 aa). The span at 170–181 shows a compositional bias: basic and acidic residues; it reads SEPRRAKQEARN. Gly residues predominate over residues 189–199; sequence GEVGSGAGPGT. Phosphoserine is present on serine 220. Residues 322 to 424 enclose the CS 2 domain; it reads LAFVKNDSYE…RQSQRWGGLE (103 aa). The tract at residues 432 to 482 is disordered; it reads VGGAKVAVPTGPTPLDSTPPGGGPHPLTGQEEARAVEKEKPKARSEDSGLD. Residues 462–478 are compositionally biased toward basic and acidic residues; sequence EEARAVEKEKPKARSED. The USP domain maps to 539–1256; the sequence is TGLVNLGNTC…YAYVLFYRRR (718 aa). The active-site Nucleophile is the cysteine 548. Zn(2+) contacts are provided by cysteine 833, cysteine 836, cysteine 850, cysteine 853, cysteine 859, cysteine 863, histidine 871, and cysteine 875. The MYND-type zinc-finger motif lies at 833 to 875; the sequence is CAACQRKQQSEEEKLKRCTRCYRVGYCNQFCQKTHWPDHKGLC. A disordered region spans residues 965 to 988; that stretch reads DTGAHRVWPPADRGPVPSTSGLSS. The active-site Proton acceptor is histidine 1207. Residues 1259-1274 are compositionally biased toward basic and acidic residues; sequence PVERPPRASHSEHHPD. The segment at 1259-1281 is disordered; that stretch reads PVERPPRASHSEHHPDLGPAAEA. The chain crosses the membrane as a helical span at residues 1334 to 1354; that stretch reads FVLGTVAALVALVLNVFYPLV. The Lumenal portion of the chain corresponds to 1355-1360; sequence SQSRWR.

Interacts with RNF123. Interacts with BIRC2/c-IAP1, BIRC3/c-IAP2 and XIAP/BIRC4. Interacts with HIF1A (via N-terminus).

It is found in the endoplasmic reticulum membrane. It catalyses the reaction Thiol-dependent hydrolysis of ester, thioester, amide, peptide and isopeptide bonds formed by the C-terminal Gly of ubiquitin (a 76-residue protein attached to proteins as an intracellular targeting signal).. In terms of biological role, deubiquitinating enzyme that regulates the degradation of various proteins by removing ubiquitin moieties, thereby preventing their proteasomal degradation. Stabilizes RNF123, which promotes CDKN1B degradation and contributes to cell proliferation. Decreases the levels of ubiquitinated proteins during skeletal muscle formation and acts to repress myogenesis. Modulates transcription of major myofibrillar proteins. Also involved in turnover of endoplasmic-reticulum-associated degradation (ERAD) substrates. Mechanistically, deubiquitinates and thereby stabilizes several E3 ligases involved in the ERAD pathway including SYVN1 or MARCHF6. Regulates the stability of other E3 ligases including BIRC2/c-IAP1 and BIRC3/c-IAP2 by preventing their ubiquitination. Required for cells to mount an appropriate response to hypoxia by rescuing HIF1A from degradation in a non-catalytic manner and by mediating the deubiquitination of FUNDC1. Attenuates mitochondrial damage and ferroptosis by targeting and stabilizing NADPH oxidase 4/NOX4. Negatively regulates TNF-alpha- and IL-1beta-triggered NF-kappa-B activation by hydrolyzing 'Lys-27'- and 'Lys-63'-linked polyubiquitin chains from MAP3K7. Modulates also the protein level and aggregation of polyQ-expanded huntingtin/HTT through HSP90AA1. This Mus musculus (Mouse) protein is Ubiquitin carboxyl-terminal hydrolase 19 (Usp19).